The sequence spans 365 residues: Geranylgeranyl pyrophosphate synthase (365 aa).

The span at 1-11 (MKPLPSTNGKV) shows a compositional bias: polar residues. Residues 1–36 (MKPLPSTNGKVNGNGKHHDSSLSSTSSTSSSSSSDT) form a disordered region. Residues 21–34 (SLSSTSSTSSSSSS) are compositionally biased toward low complexity. Isopentenyl diphosphate-binding residues include Lys78, Arg81, and His110. The Mg(2+) site is built by Asp117 and Asp121. Position 126 (Arg126) interacts with dimethylallyl diphosphate. Isopentenyl diphosphate is bound at residue Arg127. Dimethylallyl diphosphate contacts are provided by Lys211, Thr212, and Gln247. Asp250 is a Mg(2+) binding site. 3 residues coordinate dimethylallyl diphosphate: Asn254, Lys263, and Lys273.

The protein belongs to the FPP/GGPP synthase family. It depends on Mg(2+) as a cofactor.

It catalyses the reaction isopentenyl diphosphate + dimethylallyl diphosphate = (2E)-geranyl diphosphate + diphosphate. The enzyme catalyses isopentenyl diphosphate + (2E)-geranyl diphosphate = (2E,6E)-farnesyl diphosphate + diphosphate. It carries out the reaction isopentenyl diphosphate + (2E,6E)-farnesyl diphosphate = (2E,6E,10E)-geranylgeranyl diphosphate + diphosphate. Its function is as follows. Geranylgeranyl pyrophosphate synthase that catalyzes the trans-addition of the three molecules of IPP onto DMAPP to form geranylgeranyl pyrophosphate. Does not show any monoterpene nor sesquiterpene synthase activity. This Melampsora lini (Rust fungus) protein is Geranylgeranyl pyrophosphate synthase.